Here is a 52-residue protein sequence, read N- to C-terminus: Insulin (52 aa).

Disulfide bonds link C7–C38, C19–C51, and C37–C42.

Belongs to the insulin family. Heterodimer of a B chain and an A chain linked by two disulfide bonds.

The protein localises to the secreted. Functionally, insulin decreases blood glucose concentration. It increases cell permeability to monosaccharides, amino acids and fatty acids. It accelerates glycolysis, the pentose phosphate cycle, and glycogen synthesis in liver. The polypeptide is Insulin (ins) (Atractosteus spatula (Alligator gar)).